The sequence spans 356 residues: Outer membrane protein Omp38 (356 aa).

An N-terminal signal peptide occupies residues 1 to 19 (MKLSRIALATMLVAAPLAA). The OmpA-like domain maps to 221–339 (ELTEDLNMEL…RVFATITGSR (119 aa)). Positions 237, 271, 273, 279, and 286 each coordinate meso-2,6-diaminopimelate.

This sequence belongs to the outer membrane OOP (TC 1.B.6) superfamily. In terms of assembly, homotrimer. Forms a pore with a size of 1.3 nm.

The protein resides in the cell outer membrane. It is found in the host mitochondrion. Its function is as follows. Functions as a porin. Induces apoptosis in human cell lines through caspase-dependent and AIF-dependent pathways. Purified Omp38 enters host cell and localizes to the mitochondria, which presumably leads to a release of proapoptotic molecules such as cytochrome c and AIF (apoptosis-inducing factor). Binds peptidoglycan, contributes to cell wall maintenance. The protein is Outer membrane protein Omp38 of Acinetobacter baumannii (strain ATCC 19606 / DSM 30007 / JCM 6841 / CCUG 19606 / CIP 70.34 / NBRC 109757 / NCIMB 12457 / NCTC 12156 / 81).